The chain runs to 191 residues: RRP15-like protein (191 aa).

Residues 1–11 are compositionally biased toward basic and acidic residues; that stretch reads MSTKNRDRLVV. The interval 1 to 52 is disordered; sequence MSTKNRDRLVVTEDSDDDNEREEMSSGGESGEEGPSSVDGGAGDADETVAFP. The stretch at 53-84 forms a coiled coil; the sequence is AIERRKKKVIKKLTKKEQSLKKSVKEYRIKLA. The segment covering 119 to 153 has biased composition (basic and acidic residues); the sequence is QKTMSDAVKEKMTARERREARQRFDGKNFDSDRFA. The tract at residues 119–191 is disordered; sequence QKTMSDAVKE…IDTGNYSDED (73 aa). Acidic residues predominate over residues 166 to 191; it reads GEDDDGEDQMDIGEEQIDTGNYSDED.

The protein belongs to the RRP15 family.

This is RRP15-like protein from Caenorhabditis elegans.